Reading from the N-terminus, the 83-residue chain is Antitoxin ChpS (83 aa).

One can recognise a SpoVT-AbrB domain in the interval 3–48 (ITIKRWGNSAGMVIPNIVMKELNLQPGQSVEAQVSNNQLILTPISR).

It belongs to the PemI family. As to quaternary structure, interacts with ChpB, inhibiting its endoribonuclease activity.

Functionally, antitoxin component of a type II toxin-antitoxin (TA) system. May be involved in the regulation of cell growth. It acts as a suppressor of the endoribonuclease (inhibitory function) of ChpB protein. Both ChpS and ChpB probably bind to the promoter region of the chpS-chpB operon to autoregulate their synthesis. The protein is Antitoxin ChpS (chpS) of Escherichia coli (strain K12).